A 493-amino-acid polypeptide reads, in one-letter code: NADH-quinone oxidoreductase subunit M (493 aa).

14 consecutive transmembrane segments (helical) span residues 5–25 (PIIS…LLFI), 37–57 (VMYV…YILI), 89–109 (ISIL…IGSL), 115–135 (YIKE…GAFT), 139–159 (LLLF…IIGV), 172–192 (FFLY…YIYS), 216–236 (ILWW…PFHT), 251–271 (VILA…VLLP), 280–300 (FAIY…LVAL), 308–328 (MIAY…FSFT), 334–354 (GAIF…LIVG), 375–395 (MPVL…LPGT), 411–431 (VNVV…VYML), and 458–478 (IISI…PSSI).

It belongs to the complex I subunit 4 family.

It is found in the cell membrane. It catalyses the reaction a quinone + NADH + 5 H(+)(in) = a quinol + NAD(+) + 4 H(+)(out). Functionally, NDH-1 shuttles electrons from NADH, via FMN and iron-sulfur (Fe-S) centers, to quinones in the respiratory chain. Couples the redox reaction to proton translocation (for every two electrons transferred, four hydrogen ions are translocated across the cytoplasmic membrane), and thus conserves the redox energy in a proton gradient. The sequence is that of NADH-quinone oxidoreductase subunit M (nuoM) from Rickettsia conorii (strain ATCC VR-613 / Malish 7).